Here is a 364-residue protein sequence, read N- to C-terminus: Cobalt-precorrin-5B C(1)-methyltransferase (364 aa).

This sequence belongs to the CbiD family.

It catalyses the reaction Co-precorrin-5B + S-adenosyl-L-methionine = Co-precorrin-6A + S-adenosyl-L-homocysteine. Its pathway is cofactor biosynthesis; adenosylcobalamin biosynthesis; cob(II)yrinate a,c-diamide from sirohydrochlorin (anaerobic route): step 6/10. Functionally, catalyzes the methylation of C-1 in cobalt-precorrin-5B to form cobalt-precorrin-6A. This Pseudomonas putida (strain ATCC 700007 / DSM 6899 / JCM 31910 / BCRC 17059 / LMG 24140 / F1) protein is Cobalt-precorrin-5B C(1)-methyltransferase.